The sequence spans 528 residues: 2-isopropylmalate synthase (528 aa).

Positions Ile12 to Val279 constitute a Pyruvate carboxyltransferase domain. Asp21, His214, His216, and Asn250 together coordinate Mn(2+). A regulatory domain region spans residues Arg401–Ala528.

Belongs to the alpha-IPM synthase/homocitrate synthase family. LeuA type 1 subfamily. In terms of assembly, homodimer. Requires Mn(2+) as cofactor.

Its subcellular location is the cytoplasm. The enzyme catalyses 3-methyl-2-oxobutanoate + acetyl-CoA + H2O = (2S)-2-isopropylmalate + CoA + H(+). It participates in amino-acid biosynthesis; L-leucine biosynthesis; L-leucine from 3-methyl-2-oxobutanoate: step 1/4. Functionally, catalyzes the condensation of the acetyl group of acetyl-CoA with 3-methyl-2-oxobutanoate (2-ketoisovalerate) to form 3-carboxy-3-hydroxy-4-methylpentanoate (2-isopropylmalate). This Stenotrophomonas maltophilia (strain K279a) protein is 2-isopropylmalate synthase.